Reading from the N-terminus, the 315-residue chain is Ribosome biogenesis protein BRX1 homolog 1 (315 aa).

The disordered stretch occupies residues 1 to 35; it reads MGRKRKHSETVTAAPVKDSAPERPQRTLLGWKDKK. The span at 19–35 shows a compositional bias: basic and acidic residues; sequence SAPERPQRTLLGWKDKK. The Brix domain occupies 53-256; that stretch reads EKVLVTCSRR…PIKIFGGSFG (204 aa).

It belongs to the BRX1 family. In terms of tissue distribution, expressed in roots, rosette leaves, stems, flowers, siliques and seeds.

It is found in the nucleus. The protein localises to the nucleolus. In terms of biological role, involved in pre-rRNA processing and required for biogenesis of the large (60S) ribosomal subunit. Required for proper development. The chain is Ribosome biogenesis protein BRX1 homolog 1 from Arabidopsis thaliana (Mouse-ear cress).